Consider the following 685-residue polypeptide: Protein OCTOPUS (685 aa).

Disordered stretches follow at residues 1 to 34, 152 to 202, and 280 to 314; these read MNPATDPVSAAAAALAPPPQPPQPHRLSTSCNRH, RNLP…DYVE, and KWRQNQKMKKRRNGGDHRPGSARLPVEKPIGRQLR. Acidic residues predominate over residues 179 to 202; that stretch reads VNDEGEAESDDEELEEEEEEDYVE. The span at 280–291 shows a compositional bias: basic residues; the sequence is KWRQNQKMKKRR. Basic and acidic residues predominate over residues 292–314; sequence NGGDHRPGSARLPVEKPIGRQLR. Phosphoserine is present on Ser-318. Residues 419–471 form a disordered region; it reads VEEPAPPPPVVNQTNGVSDPVIIPGGSIQTRDYYTDSSSRRRKSLDRSSSSMR. The stretch at 549–578 forms a coiled coil; the sequence is LIYRKSVNKYEEEEEEEEDRYRRLNGGMVE. Residues 584-640 are disordered; the sequence is SWPELRNGGGGGGGPRMVRSNSNVSWRSSGGGSARKVNGLDRRNKSSRYSPKNGENG. Low complexity predominate over residues 601-611; sequence VRSNSNVSWRS.

The protein belongs to the OCTOPUS family. As to quaternary structure, interacts with VCC. Phosphorylation at Ser-318 amplifies the promotion of protophloem differentiation. As to expression, expressed in provascular cells and phloem initials (e.g. protophloem, metaphloem, sieve element precursor cells and sieve element procambium precursor cells).

It localises to the cell membrane. Its subcellular location is the cytoplasm. In terms of biological role, potentiates primary root protophloem differentiation. Required, together with VCC, for embryo provasculature development and cotyledon vascular complexity and connectivity. Regulates roots architecture. Mediates the recruitment of ASK7/BIN2 to the plasma membrane. The polypeptide is Protein OCTOPUS (Arabidopsis thaliana (Mouse-ear cress)).